The primary structure comprises 231 residues: Ribosomal RNA small subunit methyltransferase G (231 aa).

S-adenosyl-L-methionine contacts are provided by Gly85, Phe90, and Arg154.

The protein belongs to the methyltransferase superfamily. RNA methyltransferase RsmG family.

The protein resides in the cytoplasm. It catalyses the reaction guanosine(527) in 16S rRNA + S-adenosyl-L-methionine = N(7)-methylguanosine(527) in 16S rRNA + S-adenosyl-L-homocysteine. Functionally, specifically methylates the N7 position of guanine in position 527 of 16S rRNA. This is Ribosomal RNA small subunit methyltransferase G from Rhodopseudomonas palustris (strain BisA53).